The sequence spans 143 residues: Large ribosomal subunit protein uL16 (143 aa).

It belongs to the universal ribosomal protein uL16 family. In terms of assembly, part of the 50S ribosomal subunit.

Binds 23S rRNA and is also seen to make contacts with the A and possibly P site tRNAs. This chain is Large ribosomal subunit protein uL16, found in Fusobacterium nucleatum subsp. nucleatum (strain ATCC 25586 / DSM 15643 / BCRC 10681 / CIP 101130 / JCM 8532 / KCTC 2640 / LMG 13131 / VPI 4355).